Consider the following 346-residue polypeptide: Small ribosomal subunit biogenesis GTPase RsgA (346 aa).

The disordered stretch occupies residues 1-26 (MAKRKLTQNQTRRIQSNNAKTLHRHK). Positions 7 to 20 (TQNQTRRIQSNNAK) are enriched in polar residues. Positions 103-271 (ENEISRPDYY…LIDSPGIREF (169 aa)) constitute a CP-type G domain. GTP is bound by residues 159–162 (NKVD) and 213–221 (GQSGVGKSS). Zn(2+) is bound by residues C295, C300, H302, and C308.

It belongs to the TRAFAC class YlqF/YawG GTPase family. RsgA subfamily. As to quaternary structure, monomer. Associates with 30S ribosomal subunit, binds 16S rRNA. It depends on Zn(2+) as a cofactor.

The protein localises to the cytoplasm. Its function is as follows. One of several proteins that assist in the late maturation steps of the functional core of the 30S ribosomal subunit. Helps release RbfA from mature subunits. May play a role in the assembly of ribosomal proteins into the subunit. Circularly permuted GTPase that catalyzes slow GTP hydrolysis, GTPase activity is stimulated by the 30S ribosomal subunit. This chain is Small ribosomal subunit biogenesis GTPase RsgA, found in Haemophilus influenzae (strain 86-028NP).